The primary structure comprises 400 residues: Cytohesin-2 (400 aa).

Positions 10–63 (DLTPEERMELENIRRRKQELLVEIQRLREELSEAMSEVEGLEANEGSKTLQRNR) form a coiled coil. One can recognise an SEC7 domain in the interval 72–201 (FNMDPKKGIQ…VIMLNTSLHN (130 aa)). Residues 259–376 (NPDREGWLLK…WIKSIQAAVS (118 aa)) enclose the PH domain. Residues 268–276 (KLGGGRVKT), arginine 280, tyrosine 291, arginine 301, lysine 339, asparagine 350, and histidine 351 contribute to the a 1,2-diacyl-sn-glycero-3-phospho-(1D-myo-inositol-3,4,5-trisphosphate) site. A C-terminal autoinhibitory region region spans residues 387–395 (RKKRISVKK).

In terms of assembly, heteromer. Composed of TAMALIN, CYTH2 and at least one GRM1. Interacts with ARRB1. Interacts with ARL4D; the interaction is direct. Directly interacts with CCDC120 through the coiled coil domain; this interaction stabilizes CCDC120, possibly by preventing its ubiquitination, and is required for neurite growth in neuroblastoma cells. Interacts with ARF1. Interacts with FRMD4A. Interacts (via N-terminal domain) with INAVA (via N-terminal domain). In terms of tissue distribution, widely expressed.

Its subcellular location is the cell membrane. It localises to the cytoplasm. It is found in the cell projection. The protein localises to the growth cone. The protein resides in the cell junction. Its subcellular location is the tight junction. It localises to the adherens junction. Acts as a guanine-nucleotide exchange factor (GEF). Promotes guanine-nucleotide exchange on ARF1, ARF3 and ARF6. Activates ARF factors through replacement of GDP with GTP. The cell membrane form, in association with ARL4 proteins, recruits ARF6 to the plasma membrane. Involved in neurite growth. The sequence is that of Cytohesin-2 from Homo sapiens (Human).